The sequence spans 319 residues: Forkhead box protein E3 (319 aa).

Residues 1–69 (MAGRSDMDPP…GRRRRRPLQR (69 aa)) form a disordered region. The segment covering 44 to 53 (AAAGRGEAAP) has biased composition (low complexity). A DNA-binding region (fork-head) is located at residues 71–165 (KPPYSYIALI…DNGSFLRRRK (95 aa)).

Its subcellular location is the nucleus. In terms of biological role, transcription factor that controls lens epithelial cell growth through regulation of proliferation, apoptosis and cell cycle. During lens development, controls the ratio of the lens fiber cells to the cells of the anterior lens epithelium by regulating the rate of proliferation and differentiation. Controls lens vesicle closure and subsequent separation of the lens vesicle from ectoderm. Controls the expression of DNAJB1 in a pathway that is crucial for the development of the anterior segment of the eye. In Homo sapiens (Human), this protein is Forkhead box protein E3 (FOXE3).